Consider the following 258-residue polypeptide: Probable pectin methylesterase CGR3 (258 aa).

Topologically, residues 1-29 (MSRRQVRRVGDSGSFPFVGALHSKSRSSP) are cytoplasmic. A helical transmembrane segment spans residues 30 to 50 (LLSVCLVLVGACLLIGYAYSG). Residues 51–258 (PGMFKSIREV…CQVFHLKPLH (208 aa)) lie on the Lumenal side of the membrane. Asn171 is a glycosylation site (N-linked (GlcNAc...) asparagine).

It belongs to the class I-like SAM-binding methyltransferase superfamily.

It is found in the golgi apparatus membrane. Functionally, together with CGR2, required for homogalacturonan pectins (HG) methylesterification in the Golgi apparatus prior to integration into cell walls, essential for general growth and development. Promotes petiole elongation. Impacts photosynthesis and respiration efficiency by influencing leaf mesophyll morphology and physiology; pectin methylesterification modulates both expansion and positioning of cells in leaves, probably by changing cell walls plasticity. The polypeptide is Probable pectin methylesterase CGR3 (Arabidopsis thaliana (Mouse-ear cress)).